The chain runs to 247 residues: Phycocyanobilin:ferredoxin oxidoreductase (247 aa).

The protein belongs to the HY2 family.

It catalyses the reaction (2R,3Z)-phycocyanobilin + 4 oxidized [2Fe-2S]-[ferredoxin] = biliverdin IXalpha + 4 reduced [2Fe-2S]-[ferredoxin] + 4 H(+). Functionally, catalyzes the four-electron reduction of biliverdin IX-alpha (2-electron reduction at both the A and D rings); the reaction proceeds via an isolatable 2-electron intermediate, 181,182-dihydrobiliverdin. This Synechococcus sp. (strain CC9605) protein is Phycocyanobilin:ferredoxin oxidoreductase.